The chain runs to 208 residues: Hemocyanin, units E and F (208 aa).

His-1 contributes to the Cu cation binding site. The segment at His-1–Leu-74 is unit E. Cys-7 and Cys-18 are joined by a disulfide. Positions Cys-19–His-21 form a cross-link, 2'-(S-cysteinyl)-histidine (Cys-His). Asn-43 is a glycosylation site (N-linked (GlcNAc...) asparagine). The tract at residues Val-75–Thr-208 is unit F. Position 113 (His-113) interacts with Cu cation. Cys-119 and Cys-130 form a disulfide bridge. Residues Cys-131–His-133 constitute a cross-link (2'-(S-cysteinyl)-histidine (Cys-His)). Cu cation contacts are provided by His-133 and His-142.

Belongs to the tyrosinase family. Hemocyanin subfamily. In terms of assembly, decamers of large identical subunits (390 kDa), each containing 8 globular oxygen-binding functional units. Cu(2+) serves as cofactor.

Its function is as follows. Hemocyanins are copper-containing oxygen carriers occurring freely dissolved in the hemolymph of many mollusks and arthropods. The chain is Hemocyanin, units E and F from Sepia officinalis (Common cuttlefish).